We begin with the raw amino-acid sequence, 55 residues long: Large ribosomal subunit protein bL33 (55 aa).

The protein belongs to the bacterial ribosomal protein bL33 family.

The polypeptide is Large ribosomal subunit protein bL33 (Wigglesworthia glossinidia brevipalpis).